Here is a 71-residue protein sequence, read N- to C-terminus: uncharacterized protein (71 aa).

The helical transmembrane segment at 12 to 34 (YLYNYFSSTTSWLVFIILSLDTI) threads the bilayer.

The protein resides in the membrane. This is an uncharacterized protein from Schizosaccharomyces pombe (strain 972 / ATCC 24843) (Fission yeast).